We begin with the raw amino-acid sequence, 452 residues long: GPI mannosyltransferase 2 (452 aa).

The Cytoplasmic segment spans residues 1–7; the sequence is MMEKVTK. A helical transmembrane segment spans residues 8-28; sequence LALTSRVMVLVVQLLANFATP. Over 29 to 113 the chain is Lumenal; that stretch reads DHKPDVFRMP…HLGIPLSRDA (85 aa). A helical membrane pass occupies residues 114–134; it reads LILLVAVALNVLIFCKTANVL. Residues 135–161 lie on the Cytoplasmic side of the membrane; the sequence is YKLTQRMFNDHNKSWNAALIFCFNPAS. Residues 162 to 182 form a helical membrane-spanning segment; it reads IFFSAAYSETFFAFASFSLML. Topologically, residues 183–209 are lumenal; that stretch reads ECMRSEKDFRTFRLGAALTGCFVCRSN. A helical transmembrane segment spans residues 210-230; it reads GLLTLGFPLYFLARHILLSTG. Residues 231–238 lie on the Cytoplasmic side of the membrane; that stretch reads SVQRCWQL. The helical transmembrane segment at 239-259 threads the bilayer; sequence FKMGLAMLVALGILHTYYFYI. The Lumenal segment spans residues 260 to 284; it reads YRLYCLPDVKVQHAQHVVDYAKERS. A helical transmembrane segment spans residues 285 to 305; sequence FLISGQASVGSPWCGYTLPFP. Residues 306–327 lie on the Cytoplasmic side of the membrane; it reads YTYVQSHYWDVGFLRYYKWKQL. Residues 328 to 348 traverse the membrane as a helical segment; that stretch reads PNFLLALPMLLFMHWHCYDYI. Residues 349-370 are Lumenal-facing; sequence RKLVANTWSKISPSEYQGILKE. Residues 371-391 traverse the membrane as a helical segment; the sequence is HISFPFVLHAAVLTLVCTLYV. Residues 392–398 are Cytoplasmic-facing; it reads HIQVSTR. Residues 399–419 form a helical membrane-spanning segment; the sequence is LLASATPVFYWFAADYMPNTF. Over 420 to 426 the chain is Lumenal; sequence QLSFRSK. Residues 427-447 traverse the membrane as a helical segment; sequence AGVLFIWCLTYSLVGTVLFSN. Topologically, residues 448–452 are cytoplasmic; it reads NYPWT.

It belongs to the PIGV family.

The protein localises to the endoplasmic reticulum membrane. The protein operates within glycolipid biosynthesis; glycosylphosphatidylinositol-anchor biosynthesis. Functionally, mannosyltransferase involved in glycosylphosphatidylinositol-anchor biosynthesis. Transfers the second mannose to the glycosylphosphatidylinositol during GPI precursor assembly. Required for the GPI-mediated endoplasmic reticulum exit and proper targeting to the cell surface of chp. Required for GPI-mediated membrane attachment of chp, qsm and Cont. Essential for microvillar stability in the rhabdomere. This is GPI mannosyltransferase 2 from Drosophila pseudoobscura pseudoobscura (Fruit fly).